The following is a 550-amino-acid chain: (S)-beta-bisabolene synthase (550 aa).

Mg(2+)-binding residues include Asp303, Asp307, Ser451, and Glu455. Positions 303-307 (DDTYD) match the DDXXD motif motif.

It belongs to the terpene synthase family. Tpsa subfamily. It depends on Mg(2+) as a cofactor. The cofactor is Mn(2+). As to expression, expressed only in young rhizomes. Not detected in leaves, roots and mature rhizomes.

It carries out the reaction (2E,6E)-farnesyl diphosphate = (S)-beta-bisabolene + diphosphate. Functionally, sesquiterpene synthase involved in the biosynthesis of bisabolene. This chain is (S)-beta-bisabolene synthase (TPS1), found in Zingiber officinale (Ginger).